Reading from the N-terminus, the 553-residue chain is Tether containing UBX domain for GLUT4 (553 aa).

Residue Ala-2 is modified to N-acetylalanine. Low complexity predominate over residues 182–202 (PGSLGSSASAGQAAASAPLPL). The disordered stretch occupies residues 182–324 (PGSLGSSASA…REPVDREPVV (143 aa)). The residue at position 184 (Ser-184) is a Phosphoserine. A compositionally biased stretch (basic and acidic residues) spans 206–217 (ELSRGDLSRPED). Residues 260 to 280 (RPLTSSSAKLPKSLSSPGGPS) show a composition bias toward low complexity. At Ser-275 the chain carries Phosphoserine. A compositionally biased stretch (basic and acidic residues) spans 296 to 324 (EQERERDPQQEQERERPVDREPVDREPVV). The interaction with GLUT4 stretch occupies residues 317-380 (PVDREPVVCH…LVTKAFREAQ (64 aa)). In terms of domain architecture, UBX spans 386–462 (ERYPKVALRV…NLFPAALVHL (77 aa)). The tract at residues 499-536 (GSPSPLPAPDPAPKSEPAAEEGALVPPEPIPGTAQPVK) is disordered. 2 positions are modified to phosphoserine: Ser-500 and Ser-502. Residues 502–512 (SPLPAPDPAPK) show a composition bias toward pro residues.

As to quaternary structure, interacts with GLUT4. Interacts with VCPKMT. Interacts with VCP. Ubiquitous. Highly expressed in testis, heart, skeletal muscle and pancreas.

It is found in the endomembrane system. Its subcellular location is the endoplasmic reticulum-Golgi intermediate compartment membrane. It localises to the cytoplasm. The protein localises to the nucleus. Functionally, tethering protein that sequesters GLUT4-containing vesicles in the cytoplasm in the absence of insulin. Modulates the amount of GLUT4 that is available at the cell surface. Enhances VCP methylation catalyzed by VCPKMT. In Homo sapiens (Human), this protein is Tether containing UBX domain for GLUT4 (ASPSCR1).